The following is a 103-amino-acid chain: N(4)-acetylcytidine amidohydrolase (103 aa).

One can recognise an ASCH domain in the interval 7–93; it reads TFFERFEQDI…VIAEIYPGLE (87 aa). K21 acts as the Proton acceptor in catalysis. The Nucleophile role is filled by T24. Residue E74 is the Proton donor of the active site.

This sequence belongs to the N(4)-acetylcytidine amidohydrolase family.

It catalyses the reaction N(4)-acetylcytidine + H2O = cytidine + acetate + H(+). The catalysed reaction is N(4)-acetyl-2'-deoxycytidine + H2O = 2'-deoxycytidine + acetate + H(+). It carries out the reaction N(4)-acetylcytosine + H2O = cytosine + acetate + H(+). In terms of biological role, catalyzes the hydrolysis of N(4)-acetylcytidine (ac4C). The polypeptide is N(4)-acetylcytidine amidohydrolase (Shewanella putrefaciens (strain CN-32 / ATCC BAA-453)).